A 225-amino-acid chain; its full sequence is Glutathione S-transferase U3 (225 aa).

In terms of domain architecture, GST N-terminal spans 6–86; that stretch reads EGVKLIGSWA…YIDQTWTNNP (81 aa). Glutathione is bound by residues 16–17, 43–44, 57–58, and 70–71; these read SP, VK, KV, and ES. The 128-residue stretch at 91–218 folds into the GST C-terminal domain; sequence SPYDKAMARF…EKHIEHMMKI (128 aa). Thr152 is modified (phosphothreonine).

The protein belongs to the GST superfamily. Tau family.

The protein resides in the cytoplasm. Its subcellular location is the cytosol. The catalysed reaction is RX + glutathione = an S-substituted glutathione + a halide anion + H(+). Its function is as follows. May be involved in the conjugation of reduced glutathione to a wide number of exogenous and endogenous hydrophobic electrophiles and have a detoxification role against certain herbicides. This chain is Glutathione S-transferase U3 (GSTU3), found in Arabidopsis thaliana (Mouse-ear cress).